A 332-amino-acid chain; its full sequence is 30 kDa heat shock protein (332 aa).

Residues 1 to 34 (MNDTLSSFLNRNEALGLNPPHGLDMHITKRGSDW) lie on the Extracellular side of the membrane. A helical membrane pass occupies residues 35–55 (LWAVFAVFGFILLCYVVMFFI). Topologically, residues 56–65 (AENKGSRLTR) are cytoplasmic. The helical transmembrane segment at 66-86 (YALAPAFLITFFEFFAFFTYA) threads the bilayer. The Extracellular segment spans residues 87–121 (SDLGWTGVQAEFNHVKVSKSITGEVPGIRQIFYSK). Residues 122 to 142 (YIAWFLSWPCLLFLIELAAST) form a helical membrane-spanning segment. Over 143-157 (TGENDDISALDMVHS) the chain is Cytoplasmic. The chain crosses the membrane as a helical span at residues 158-178 (LLIQIVGTLFWVVSLLVGSLI). The Extracellular portion of the chain corresponds to 179–181 (KST). A helical transmembrane segment spans residues 182–202 (YKWGYYTIGAVAMLVTQGVIC). Topologically, residues 203–215 (QRQFFNLKTRGFN) are cytoplasmic. A helical transmembrane segment spans residues 216–236 (ALMLCTCMVIVWLYFICWGLS). At 237–248 (DGGNRIQPDGEA) the chain is on the extracellular side. The helical transmembrane segment at 249–269 (IFYGVLDLCVFAIYPCYLLIA) threads the bilayer. Over 270-332 (VSRDGKLPRL…EAEQAVEDTA (63 aa)) the chain is Cytoplasmic. The interval 290–332 (ATDDVEDAAPETKEAVPESPRASGETAIHEPEPEAEQAVEDTA) is disordered. Ser-308 is modified (phosphoserine). Over residues 322–332 (PEAEQAVEDTA) the composition is skewed to acidic residues. Thr-331 is subject to Phosphothreonine.

It belongs to the archaeal/bacterial/fungal opsin family.

It localises to the membrane. Probably cooperates with other heat shock proteins in the translocation of polypeptides through membranes. It may counteract the altering effect of heat shock on the plasma membrane. This Saccharomyces cerevisiae (strain ATCC 204508 / S288c) (Baker's yeast) protein is 30 kDa heat shock protein (HSP30).